A 439-amino-acid polypeptide reads, in one-letter code: MQSYFNELEQVRYEGSQSTNPLAFHHYNPDEMILGKRMADHLRFAACYWHTFCWGGADMFGANAFDRPWQQPGDALALAKRKAKVAFEFFHKLNVPYYCFHDVDVSPEGASLQEYLNNFAVMTDVLAEKQAASGVKLLWGTANCFTHPRYGAGAATNPDPEVFSWAATQVFTAMNATRQLGGENYVLWGGREGYETLLNTDLRQEREQIGRFMQMVVEHKHKTGFQGTLLIEPKPQEPTKHQYDYDVATVYGFLKQFGLEKEIKVNIEANHATLAGHSFHHEIASAIALGIFGSVDANRGDPQLGWDTDQFPNSVEENTLVMFEILKAGGFTTGGLNFDAKVRRQSTDKYDLFYGHIGAMDTMALALKFAAKMIEDGQLDQIVAKRYAGWNSELGQQILQGKMSLEELSRYASQHNLNPQHQSGHQELLENKVNRYLFG.

Catalysis depends on residues H101 and D104. Residues E232, E268, H271, D296, D307, D309, and D339 each contribute to the Mg(2+) site.

It belongs to the xylose isomerase family. As to quaternary structure, homotetramer. Requires Mg(2+) as cofactor.

It localises to the cytoplasm. It carries out the reaction alpha-D-xylose = alpha-D-xylulofuranose. The polypeptide is Xylose isomerase (Yersinia pestis bv. Antiqua (strain Angola)).